Here is a 187-residue protein sequence, read N- to C-terminus: Resolvase OPG149 (187 aa).

This sequence belongs to the RuvC family. Poxviruses-type subfamily. Requires Mg(2+) as cofactor.

Plays a role in DNA replication by cleaving viral DNA concatamers to yield unit-length viral genomes. The concatamer junctions contain inverted repeat sequences that can be extruded as cruciforms, yielding Holliday junctions that A22 protein cleaves. This chain is Resolvase OPG149 (OPG149), found in Cynomys gunnisoni (Gunnison's prairie dog).